The following is a 1196-amino-acid chain: DNA-directed RNA polymerase subunit beta (1196 aa).

Belongs to the RNA polymerase beta chain family. As to quaternary structure, the RNAP catalytic core consists of 2 alpha, 1 beta, 1 beta' and 1 omega subunit. When a sigma factor is associated with the core the holoenzyme is formed, which can initiate transcription.

It catalyses the reaction RNA(n) + a ribonucleoside 5'-triphosphate = RNA(n+1) + diphosphate. Its function is as follows. DNA-dependent RNA polymerase catalyzes the transcription of DNA into RNA using the four ribonucleoside triphosphates as substrates. This chain is DNA-directed RNA polymerase subunit beta, found in Lactococcus lactis subsp. cremoris (strain MG1363).